The primary structure comprises 301 residues: tRNA pseudouridine synthase B (301 aa).

D47 serves as the catalytic Nucleophile.

It belongs to the pseudouridine synthase TruB family. Type 1 subfamily.

It catalyses the reaction uridine(55) in tRNA = pseudouridine(55) in tRNA. In terms of biological role, responsible for synthesis of pseudouridine from uracil-55 in the psi GC loop of transfer RNAs. The protein is tRNA pseudouridine synthase B of Cereibacter sphaeroides (strain ATCC 17023 / DSM 158 / JCM 6121 / CCUG 31486 / LMG 2827 / NBRC 12203 / NCIMB 8253 / ATH 2.4.1.) (Rhodobacter sphaeroides).